The following is a 198-amino-acid chain: Protein hunchback (198 aa).

2 disordered regions span residues 16-117 and 152-198; these read SHHH…PMQS and NDKL…KYMA. A compositionally biased stretch (basic residues) spans 17 to 31; that stretch reads HHHHHHHAHHSHHQH. Composition is skewed to low complexity over residues 35-46 and 68-83; these read SNSNSNASSPHQ and QQQQ…QQQQ. Residues 95 to 105 are compositionally biased toward polar residues; sequence PSPSNNDQNSP. The segment covering 179 to 198 has biased composition (basic and acidic residues); that stretch reads EPEKEHDLMSNSSEDMKYMA.

It belongs to the hunchback C2H2-type zinc-finger protein family.

The protein resides in the nucleus. In terms of biological role, gap class segmentation protein that controls development of head structures. In Drosophila disjuncta (Fruit fly), this protein is Protein hunchback (hb).